The sequence spans 509 residues: Coiled-coil domain-containing protein 181 (509 aa).

A compositionally biased stretch (basic and acidic residues) spans 46 to 82; it reads ENINQDLKENETVMEHTKRHSDPDKSLQDEVSPRRND. 2 disordered regions span residues 46–120 and 241–367; these read ENIN…EEED and PINN…EEKE. Polar residues-rich tracts occupy residues 243–266 and 300–334; these read NNANSTENDPQQLLPRSSNSSVSG and TCPSSAVNSDRSKGNGKSNHRTQSAHISPVTSTYC. A coiled-coil region spans residues 335–375; sequence LSPRQKELQKQLEEKREKLKREEERRKIEEEKEKKRENDIV. Residues 338–367 show a composition bias toward basic and acidic residues; it reads RQKELQKQLEEKREKLKREEERRKIEEEKE.

It belongs to the CCDC181 family. In terms of assembly, homodimer. Interacts with HOOK1. Interacts with HOOK2. Interacts with HOOK3.

Its subcellular location is the cytoplasm. The protein localises to the cytoskeleton. It is found in the cell projection. The protein resides in the cilium. It localises to the flagellum. Microtubule-binding protein that localizes to the microtubular manchette of elongating spermatids. The protein is Coiled-coil domain-containing protein 181 of Homo sapiens (Human).